The following is a 423-amino-acid chain: COP9 signalosome complex subunit 3 (423 aa).

The residue at position 2 (Ala2) is an N-acetylalanine. The 169-residue stretch at 197 to 365 (NFERALYFYE…GMVSFHDNPE (169 aa)) folds into the PCI domain. A disordered region spans residues 402 to 423 (QFVQKSMGSQEDDSGNKPSSYS). Phosphoserine is present on residues Ser407, Ser410, and Ser423.

Belongs to the CSN3 family. As to quaternary structure, component of the CSN complex, composed of COPS1/GPS1, COPS2, COPS3, COPS4, COPS5, COPS6, COPS7 (COPS7A or COPS7B), COPS8 and COPS9. In the complex, it probably interacts directly with COPS1, COPS4, COPS8 and COPS9. Interacts with CK2 and PKD. Interacts with the translation initiation factor EIF3S6 and IKBKG. Interacts with ERCC6.

It is found in the cytoplasm. It localises to the nucleus. Component of the COP9 signalosome complex (CSN), a complex involved in various cellular and developmental processes. The CSN complex is an essential regulator of the ubiquitin (Ubl) conjugation pathway by mediating the deneddylation of the cullin subunits of SCF-type E3 ligase complexes, leading to decrease the Ubl ligase activity of SCF-type complexes such as SCF, CSA or DDB2. The complex is also involved in phosphorylation of p53/TP53, c-jun/JUN, IkappaBalpha/NFKBIA, ITPK1 and IRF8/ICSBP, possibly via its association with CK2 and PKD kinases. CSN-dependent phosphorylation of TP53 and JUN promotes and protects degradation by the Ubl system, respectively. Essential to maintain the survival of epiblast cells and thus the development of the postimplantation embryo. This chain is COP9 signalosome complex subunit 3 (Cops3), found in Rattus norvegicus (Rat).